The primary structure comprises 272 residues: Shikimate dehydrogenase (NADP(+)) (272 aa).

Shikimate is bound by residues 14–16 (SKS) and T61. Catalysis depends on K65, which acts as the Proton acceptor. E77 lines the NADP(+) pocket. The shikimate site is built by N86 and D102. NADP(+) is bound by residues 126-130 (GAGGA), 149-154 (NRTASR), and M213. Position 215 (Y215) interacts with shikimate. Position 237 (G237) interacts with NADP(+).

This sequence belongs to the shikimate dehydrogenase family. In terms of assembly, homodimer.

It catalyses the reaction shikimate + NADP(+) = 3-dehydroshikimate + NADPH + H(+). It functions in the pathway metabolic intermediate biosynthesis; chorismate biosynthesis; chorismate from D-erythrose 4-phosphate and phosphoenolpyruvate: step 4/7. Functionally, involved in the biosynthesis of the chorismate, which leads to the biosynthesis of aromatic amino acids. Catalyzes the reversible NADPH linked reduction of 3-dehydroshikimate (DHSA) to yield shikimate (SA). The polypeptide is Shikimate dehydrogenase (NADP(+)) (Salmonella choleraesuis (strain SC-B67)).